A 411-amino-acid chain; its full sequence is Serine--tRNA ligase (411 aa).

226–228 (TSE) serves as a coordination point for L-serine. ATP is bound at residue 257–259 (RQE). E280 contributes to the L-serine binding site. 344–347 (EISS) contributes to the ATP binding site. Residue S379 participates in L-serine binding.

The protein belongs to the class-II aminoacyl-tRNA synthetase family. Type-1 seryl-tRNA synthetase subfamily. Homodimer. The tRNA molecule binds across the dimer.

Its subcellular location is the cytoplasm. It carries out the reaction tRNA(Ser) + L-serine + ATP = L-seryl-tRNA(Ser) + AMP + diphosphate + H(+). It catalyses the reaction tRNA(Sec) + L-serine + ATP = L-seryl-tRNA(Sec) + AMP + diphosphate + H(+). Its pathway is aminoacyl-tRNA biosynthesis; selenocysteinyl-tRNA(Sec) biosynthesis; L-seryl-tRNA(Sec) from L-serine and tRNA(Sec): step 1/1. Its function is as follows. Catalyzes the attachment of serine to tRNA(Ser). Is also able to aminoacylate tRNA(Sec) with serine, to form the misacylated tRNA L-seryl-tRNA(Sec), which will be further converted into selenocysteinyl-tRNA(Sec). The protein is Serine--tRNA ligase of Campylobacter lari (strain RM2100 / D67 / ATCC BAA-1060).